The following is a 286-amino-acid chain: Bifunctional protein FolD (286 aa).

NADP(+) is bound by residues 166-168 (GAS) and isoleucine 232.

Belongs to the tetrahydrofolate dehydrogenase/cyclohydrolase family. Homodimer.

The enzyme catalyses (6R)-5,10-methylene-5,6,7,8-tetrahydrofolate + NADP(+) = (6R)-5,10-methenyltetrahydrofolate + NADPH. It carries out the reaction (6R)-5,10-methenyltetrahydrofolate + H2O = (6R)-10-formyltetrahydrofolate + H(+). It participates in one-carbon metabolism; tetrahydrofolate interconversion. In terms of biological role, catalyzes the oxidation of 5,10-methylenetetrahydrofolate to 5,10-methenyltetrahydrofolate and then the hydrolysis of 5,10-methenyltetrahydrofolate to 10-formyltetrahydrofolate. The chain is Bifunctional protein FolD from Shewanella denitrificans (strain OS217 / ATCC BAA-1090 / DSM 15013).